The following is a 113-amino-acid chain: U11-theraphotoxin-Hhn1a (113 aa).

The first 21 residues, 1 to 21 (MNTVRVTFLLVFVLAVSLGQA), serve as a signal peptide directing secretion. Positions 22 to 74 (DKDENRMEMQKKTEQGKSYLDFAENLLLQKLEELEAKLLEEDSEESRNSRQKR) are excised as a propeptide. Cystine bridges form between Cys75–Cys90, Cys82–Cys95, and Cys89–Cys110.

The protein belongs to the neurotoxin 14 (magi-1) family. 01 (HNTX-16) subfamily. Expressed by the venom gland.

The protein resides in the secreted. Probable ion channel inhibitor. This chain is U11-theraphotoxin-Hhn1a, found in Cyriopagopus hainanus (Chinese bird spider).